A 231-amino-acid chain; its full sequence is Orotidine 5'-phosphate decarboxylase (231 aa).

Substrate is bound by residues aspartate 11, lysine 33, 60-69 (DLKFHDIPNT), threonine 120, arginine 181, glutamine 190, glycine 210, and arginine 211. The active-site Proton donor is the lysine 62.

This sequence belongs to the OMP decarboxylase family. Type 1 subfamily. Homodimer.

The enzyme catalyses orotidine 5'-phosphate + H(+) = UMP + CO2. It functions in the pathway pyrimidine metabolism; UMP biosynthesis via de novo pathway; UMP from orotate: step 2/2. Catalyzes the decarboxylation of orotidine 5'-monophosphate (OMP) to uridine 5'-monophosphate (UMP). The sequence is that of Orotidine 5'-phosphate decarboxylase from Shewanella oneidensis (strain ATCC 700550 / JCM 31522 / CIP 106686 / LMG 19005 / NCIMB 14063 / MR-1).